Here is a 283-residue protein sequence, read N- to C-terminus: ATP phosphoribosyltransferase (283 aa).

This sequence belongs to the ATP phosphoribosyltransferase family. Long subfamily. The cofactor is Mg(2+).

Its subcellular location is the cytoplasm. The catalysed reaction is 1-(5-phospho-beta-D-ribosyl)-ATP + diphosphate = 5-phospho-alpha-D-ribose 1-diphosphate + ATP. The protein operates within amino-acid biosynthesis; L-histidine biosynthesis; L-histidine from 5-phospho-alpha-D-ribose 1-diphosphate: step 1/9. Feedback inhibited by histidine. Its function is as follows. Catalyzes the condensation of ATP and 5-phosphoribose 1-diphosphate to form N'-(5'-phosphoribosyl)-ATP (PR-ATP). Has a crucial role in the pathway because the rate of histidine biosynthesis seems to be controlled primarily by regulation of HisG enzymatic activity. This is ATP phosphoribosyltransferase from Azobacteroides pseudotrichonymphae genomovar. CFP2.